A 114-amino-acid polypeptide reads, in one-letter code: Protein S100-A9 (114 aa).

Residue threonine 2 is modified to Blocked amino end (Thr). S-nitrosocysteine; transient is present on cysteine 3. EF-hand domains lie at 12–47 (IETI…DLQN) and 54–89 (KNEK…LTWA). Position 20 (histidine 20) interacts with Zn(2+). The Ca(2+) site is built by serine 23, leucine 26, and histidine 28. A Zn(2+)-binding site is contributed by aspartate 30. Ca(2+) contacts are provided by threonine 31, glutamate 36, aspartate 67, asparagine 69, aspartate 71, glutamine 73, and glutamate 78. 2 residues coordinate Zn(2+): histidine 91 and histidine 95. Residues 93 to 102 (KMHEGDEGPG) show a composition bias toward basic and acidic residues. Residues 93–114 (KMHEGDEGPGHHHKPGLGEGTP) are disordered. Histidine 105 carries the pros-methylhistidine modification. Threonine 113 is subject to Phosphothreonine; by MAPK14.

Homodimer. Preferentially exists as a heterodimer or heterotetramer with S100A8 known as calprotectin (S100A8/A9). S100A9 interacts with ATP2A2. S100A9 interacts with AGER, and with the heterodimeric complex formed by TLR4 and LY96 in the presence of calcium and/or zinc ions. S100A9 binds quinoline-3-carboxamides in the presence of calcium and/or zinc ions. S100A9 interacts with amyloid-beta protein 40. Calprotectin (S100A8/9) interacts with CEACAM3 and tubulin filaments in a calcium-dependent manner. Heterotetrameric calprotectin (S100A8/A9) interacts with ANXA6 and associates with tubulin filaments in activated monocytes. Calprotectin (S100A8/9) interacts with NCF2/P67PHOX, RAC1, RAC2, CYBA and CYBB. Calprotectin (S100A8/9) interacts with NOS2 to form the iNOS-S100A8/A9 transnitrosylase complex; induced by LDL(ox). Calprotectin (S100A8/9) interacts with CD69. Post-translationally, phosphorylated. Phosphorylation inhibits activation of tubulin polymerization. S-nitrosylation of Cys-3 is implicated in LDL(ox)-induced S-nitrosylation of GAPDH at 'Cys-247' through a transnitrosylase mechanism involving a iNOS-S100A8/9 complex. In terms of processing, methylation at His-105 by METTL9 reduces zinc-binding without affecting heterodimerization with S100A8. Calprotectin (S100A8/9) is predominantly expressed in myeloid cells. Except for inflammatory conditions, the expression is restricted to a specific stage of myeloid differentiation since both proteins are expressed in circulating neutrophils and monocytes but are absent in normal tissue macrophages and lymphocytes. Under chronic inflammatory conditions, such as psoriasis and malignant disorders, also expressed in the epidermis. Found in high concentrations at local sites of inflammation or in the serum of patients with inflammatory diseases such as rheumatoid, cystic fibrosis, inflammatory bowel disease, Crohn's disease, giant cell arteritis, cystic fibrosis, Sjogren's syndrome, systemic lupus erythematosus, and progressive systemic sclerosis. Involved in the formation and deposition of amyloids in the aging prostate known as corpora amylacea inclusions. Strongly up-regulated in many tumors, including gastric, esophageal, colon, pancreatic, bladder, ovarian, thyroid, breast and skin cancers.

The protein localises to the secreted. It localises to the cytoplasm. It is found in the cytoskeleton. Its subcellular location is the cell membrane. In terms of biological role, S100A9 is a calcium- and zinc-binding protein which plays a prominent role in the regulation of inflammatory processes and immune response. It can induce neutrophil chemotaxis, adhesion, can increase the bactericidal activity of neutrophils by promoting phagocytosis via activation of SYK, PI3K/AKT, and ERK1/2 and can induce degranulation of neutrophils by a MAPK-dependent mechanism. Predominantly found as calprotectin (S100A8/A9) which has a wide plethora of intra- and extracellular functions. The intracellular functions include: facilitating leukocyte arachidonic acid trafficking and metabolism, modulation of the tubulin-dependent cytoskeleton during migration of phagocytes and activation of the neutrophilic NADPH-oxidase. Also participates in regulatory T-cell differentiation together with CD69. Activates NADPH-oxidase by facilitating the enzyme complex assembly at the cell membrane, transferring arachidonic acid, an essential cofactor, to the enzyme complex and S100A8 contributes to the enzyme assembly by directly binding to NCF2/P67PHOX. The extracellular functions involve pro-inflammatory, antimicrobial, oxidant-scavenging and apoptosis-inducing activities. Its pro-inflammatory activity includes recruitment of leukocytes, promotion of cytokine and chemokine production, and regulation of leukocyte adhesion and migration. Acts as an alarmin or a danger associated molecular pattern (DAMP) molecule and stimulates innate immune cells via binding to pattern recognition receptors such as Toll-like receptor 4 (TLR4) and receptor for advanced glycation endproducts (AGER). Binding to TLR4 and AGER activates the MAP-kinase and NF-kappa-B signaling pathways resulting in the amplification of the pro-inflammatory cascade. Has antimicrobial activity towards bacteria and fungi and exerts its antimicrobial activity probably via chelation of Zn(2+) which is essential for microbial growth. Can induce cell death via autophagy and apoptosis and this occurs through the cross-talk of mitochondria and lysosomes via reactive oxygen species (ROS) and the process involves BNIP3. Can regulate neutrophil number and apoptosis by an anti-apoptotic effect; regulates cell survival via ITGAM/ITGB and TLR4 and a signaling mechanism involving MEK-ERK. Its role as an oxidant scavenger has a protective role in preventing exaggerated tissue damage by scavenging oxidants. Can act as a potent amplifier of inflammation in autoimmunity as well as in cancer development and tumor spread. Has transnitrosylase activity; in oxidatively-modified low-densitity lipoprotein (LDL(ox))-induced S-nitrosylation of GAPDH on 'Cys-247' proposed to transfer the NO moiety from NOS2/iNOS to GAPDH via its own S-nitrosylated Cys-3. The iNOS-S100A8/A9 transnitrosylase complex is proposed to also direct selective inflammatory stimulus-dependent S-nitrosylation of multiple targets such as ANXA5, EZR, MSN and VIM by recognizing a [IL]-x-C-x-x-[DE] motif. This is Protein S100-A9 from Homo sapiens (Human).